The following is a 224-amino-acid chain: uncharacterized protein (224 aa).

Zn(2+) is bound by residues H57, H59, D61, H62, H138, D162, and H203.

Belongs to the metallo-beta-lactamase superfamily. Glyoxalase II family. Zn(2+) is required as a cofactor.

This is an uncharacterized protein from Mycobacterium tuberculosis (strain CDC 1551 / Oshkosh).